Consider the following 357-residue polypeptide: Peptide chain release factor 1 (357 aa).

Q232 carries the post-translational modification N5-methylglutamine. Residues A284–R304 show a composition bias toward basic and acidic residues. The disordered stretch occupies residues A284–Y308.

The protein belongs to the prokaryotic/mitochondrial release factor family. In terms of processing, methylated by PrmC. Methylation increases the termination efficiency of RF1.

The protein localises to the cytoplasm. Functionally, peptide chain release factor 1 directs the termination of translation in response to the peptide chain termination codons UAG and UAA. This is Peptide chain release factor 1 from Maricaulis maris (strain MCS10) (Caulobacter maris).